Reading from the N-terminus, the 167-residue chain is MLVYQDLLTGDELLSDSYPYKEIENGMLWEVEGKWVTKGVVEVDIGANASAEGGEDEGVDDTAVKVVDIVDVFRLQEQPAFDKKQFLGFVKRYIKLLTPKLDAEKQELFKKHIEGATKYLLCKLKDLQFFVGESMHDDGSLVFAYYKDGAADPTFLYFAYALKEIKC.

One can recognise a TCTP domain in the interval 1 to 167; the sequence is MLVYQDLLTG…FAYALKEIKC (167 aa).

The protein belongs to the TCTP family.

The protein resides in the cytoplasm. Its function is as follows. Involved in calcium binding and microtubule stabilization. The chain is Translationally-controlled tumor protein homolog (TCTP) from Medicago sativa (Alfalfa).